The sequence spans 900 residues: Probable 2-oxoadipate dehydrogenase complex component E1 homolog (900 aa).

This sequence belongs to the alpha-ketoglutarate dehydrogenase family. It depends on thiamine diphosphate as a cofactor.

The protein resides in the mitochondrion. The enzyme catalyses N(6)-[(R)-lipoyl]-L-lysyl-[protein] + 2-oxoadipate + H(+) = N(6)-[(R)-S(8)-glutaryldihydrolipoyl]-L-lysyl-[protein] + CO2. Its function is as follows. 2-oxoadipate dehydrogenase (E1a) component of the 2-oxoadipate dehydrogenase complex (OADHC). Participates in the first step, rate limiting for the overall conversion of 2-oxoadipate (alpha-ketoadipate) to glutaryl-CoA and CO(2) catalyzed by the whole OADHC. Catalyzes the irreversible decarboxylation of 2-oxoadipate via the thiamine diphosphate (ThDP) cofactor and subsequent transfer of the decarboxylated acyl intermediate on an oxidized dihydrolipoyl group that is covalently amidated to the E2 enzyme (dihydrolipoyllysine-residue succinyltransferase or DLST). This is Probable 2-oxoadipate dehydrogenase complex component E1 homolog (odhA) from Dictyostelium discoideum (Social amoeba).